The primary structure comprises 553 residues: CTP synthase (553 aa).

The interval 1–275 (MPTETEYDPS…DQYVMEQFDM (275 aa)) is amidoligase domain. S24 contributes to the CTP binding site. S24 lines the UTP pocket. Residue 25–30 (GLGKGI) participates in ATP binding. Y65 serves as a coordination point for L-glutamine. Position 82 (D82) interacts with ATP. Positions 82 and 150 each coordinate Mg(2+). Residues 157-159 (DIE), 196-201 (KTKPTQ), and K232 each bind CTP. UTP is bound by residues 196 to 201 (KTKPTQ) and K232. The region spanning 308 to 540 (KYALEDAYMS…LDAVLERADV (233 aa)) is the Glutamine amidotransferase type-1 domain. G362 is an L-glutamine binding site. C389 serves as the catalytic Nucleophile; for glutamine hydrolysis. L-glutamine contacts are provided by residues 390-393 (LGFQ), E413, and R470. Active-site residues include H513 and E515.

The protein belongs to the CTP synthase family. As to quaternary structure, homotetramer.

It carries out the reaction UTP + L-glutamine + ATP + H2O = CTP + L-glutamate + ADP + phosphate + 2 H(+). It catalyses the reaction L-glutamine + H2O = L-glutamate + NH4(+). The enzyme catalyses UTP + NH4(+) + ATP = CTP + ADP + phosphate + 2 H(+). Its pathway is pyrimidine metabolism; CTP biosynthesis via de novo pathway; CTP from UDP: step 2/2. Allosterically activated by GTP, when glutamine is the substrate; GTP has no effect on the reaction when ammonia is the substrate. The allosteric effector GTP functions by stabilizing the protein conformation that binds the tetrahedral intermediate(s) formed during glutamine hydrolysis. Inhibited by the product CTP, via allosteric rather than competitive inhibition. Functionally, catalyzes the ATP-dependent amination of UTP to CTP with either L-glutamine or ammonia as the source of nitrogen. Regulates intracellular CTP levels through interactions with the four ribonucleotide triphosphates. The chain is CTP synthase from Halobacterium salinarum (strain ATCC 29341 / DSM 671 / R1).